The primary structure comprises 306 residues: Ribonuclease Z (306 aa).

7 residues coordinate Zn(2+): His-63, His-65, Asp-67, His-68, His-140, Asp-211, and His-269. The active-site Proton acceptor is Asp-67.

Belongs to the RNase Z family. Homodimer. Zn(2+) serves as cofactor.

It catalyses the reaction Endonucleolytic cleavage of RNA, removing extra 3' nucleotides from tRNA precursor, generating 3' termini of tRNAs. A 3'-hydroxy group is left at the tRNA terminus and a 5'-phosphoryl group is left at the trailer molecule.. Its function is as follows. Zinc phosphodiesterase, which displays some tRNA 3'-processing endonuclease activity. Probably involved in tRNA maturation, by removing a 3'-trailer from precursor tRNA. The sequence is that of Ribonuclease Z from Listeria welshimeri serovar 6b (strain ATCC 35897 / DSM 20650 / CCUG 15529 / CIP 8149 / NCTC 11857 / SLCC 5334 / V8).